The sequence spans 899 residues: Receptor-like protein kinase At3g21340 (899 aa).

An N-terminal signal peptide occupies residues 1-27 (MEYHPQAIRLCALIFISFYALLHLVEA). The Extracellular segment spans residues 28-522 (QDQKGFISLD…GAKKMNVVIP (495 aa)). N-linked (GlcNAc...) asparagine glycosylation is found at asparagine 100, asparagine 146, asparagine 185, asparagine 240, asparagine 266, asparagine 420, asparagine 436, asparagine 449, asparagine 468, and asparagine 475. 3 LRR repeats span residues 415-438 (IVTS…QNLT), 439-461 (HLQE…LADI), and 463-485 (SLLV…LLQK). The chain crosses the membrane as a helical span at residues 523–543 (IVASVAFVVVLGSALAFFFIF). Residues 544–899 (KKKKTSNSQD…FDIGATPDAR (356 aa)) lie on the Cytoplasmic side of the membrane. Residue threonine 583 is modified to Phosphothreonine. Residues 592–865 (NNFERVLGKG…QVVIELNECL (274 aa)) form the Protein kinase domain. Residues 598–606 (LGKGGFGMV) and lysine 620 contribute to the ATP site. A Phosphotyrosine modification is found at tyrosine 665. The Proton acceptor role is filled by aspartate 717. Serine 751 bears the Phosphoserine mark. Residues threonine 752 and threonine 757 each carry the phosphothreonine modification. At tyrosine 765 the chain carries Phosphotyrosine.

This sequence belongs to the protein kinase superfamily. Ser/Thr protein kinase family. In terms of processing, autophosphorylated on Tyr and Thr residues.

Its subcellular location is the cell membrane. It catalyses the reaction L-seryl-[protein] + ATP = O-phospho-L-seryl-[protein] + ADP + H(+). It carries out the reaction L-threonyl-[protein] + ATP = O-phospho-L-threonyl-[protein] + ADP + H(+). The catalysed reaction is L-tyrosyl-[protein] + ATP = O-phospho-L-tyrosyl-[protein] + ADP + H(+). Its function is as follows. Probable receptor with a dual specificity kinase activity acting on both serine/threonine- and tyrosine-containing substrates. The polypeptide is Receptor-like protein kinase At3g21340 (Arabidopsis thaliana (Mouse-ear cress)).